The chain runs to 606 residues: Probable glutamine--fructose-6-phosphate aminotransferase [isomerizing] (606 aa).

The For GATase activity role is filled by Cys-2. The Glutamine amidotransferase type-2 domain maps to 2-224 (CGISACLNHT…DNDYGYITNN (223 aa)). 2 SIS domains span residues 282-427 (FFPE…SLDN) and 458-596 (LLEF…PDYP).

It carries out the reaction D-fructose 6-phosphate + L-glutamine = D-glucosamine 6-phosphate + L-glutamate. Its pathway is nucleotide-sugar biosynthesis; UDP-N-acetyl-alpha-D-glucosamine biosynthesis; alpha-D-glucosamine 6-phosphate from D-fructose 6-phosphate: step 1/1. Controls the flux of glucose into the hexosamine pathway. Most likely involved in regulating the availability of precursors for glycosylation of proteins (Potential). This chain is Probable glutamine--fructose-6-phosphate aminotransferase [isomerizing], found in Acanthamoeba polyphaga (Amoeba).